The following is a 360-amino-acid chain: Alanine racemase (360 aa).

The active-site Proton acceptor; specific for D-alanine is Lys-33. At Lys-33 the chain carries N6-(pyridoxal phosphate)lysine. Arg-129 contributes to the substrate binding site. Residue Tyr-253 is the Proton acceptor; specific for L-alanine of the active site. Met-301 contributes to the substrate binding site.

Belongs to the alanine racemase family. Pyridoxal 5'-phosphate is required as a cofactor.

The enzyme catalyses L-alanine = D-alanine. It participates in amino-acid biosynthesis; D-alanine biosynthesis; D-alanine from L-alanine: step 1/1. Catalyzes the interconversion of L-alanine and D-alanine. May also act on other amino acids. The chain is Alanine racemase (alr) from Xanthomonas campestris pv. campestris (strain 8004).